The chain runs to 108 residues: MADKVIALACAAGMSTSLLVSKMQKAAAENGKDYEIFAKSTADIDNMLAGTGSPKPDVLLLGPQVAFMKGEVAKKAEIAGVPMDVIKMQDYGMMRGDKVLAAAENLMN.

A PTS EIIB type-3 domain is found at 3 to 108; that stretch reads DKVIALACAA…VLAAAENLMN (106 aa). The active-site Phosphocysteine intermediate is the Cys10. Phosphocysteine; by EIIA is present on Cys10.

It catalyses the reaction N(pros)-phospho-L-histidyl-[protein] + D-galactose(out) = D-galactose 6-phosphate(in) + L-histidyl-[protein]. In terms of biological role, the phosphoenolpyruvate-dependent sugar phosphotransferase system (sugar PTS), a major carbohydrate active transport system, catalyzes the phosphorylation of incoming sugar substrates concomitantly with their translocation across the cell membrane. Involved in galactose transport with PtcA and Lmg_0963. This is PTS system galactose-specific EIIB component from Lactococcus lactis subsp. cremoris (strain MG1363).